Here is a 469-residue protein sequence, read N- to C-terminus: UDP-N-acetylmuramoylalanine--D-glutamate ligase (469 aa).

123–129 lines the ATP pocket; the sequence is GTNGKST.

This sequence belongs to the MurCDEF family.

The protein resides in the cytoplasm. The catalysed reaction is UDP-N-acetyl-alpha-D-muramoyl-L-alanine + D-glutamate + ATP = UDP-N-acetyl-alpha-D-muramoyl-L-alanyl-D-glutamate + ADP + phosphate + H(+). Its pathway is cell wall biogenesis; peptidoglycan biosynthesis. Its function is as follows. Cell wall formation. Catalyzes the addition of glutamate to the nucleotide precursor UDP-N-acetylmuramoyl-L-alanine (UMA). The polypeptide is UDP-N-acetylmuramoylalanine--D-glutamate ligase (Phenylobacterium zucineum (strain HLK1)).